Here is a 341-residue protein sequence, read N- to C-terminus: Protein pelota homolog (341 aa).

Belongs to the eukaryotic release factor 1 family. Pelota subfamily. As to quaternary structure, monomer. The cofactor is a divalent metal cation.

Its subcellular location is the cytoplasm. Functionally, may function in recognizing stalled ribosomes, interact with stem-loop structures in stalled mRNA molecules, and effect endonucleolytic cleavage of the mRNA. May play a role in the release non-functional ribosomes and degradation of damaged mRNAs. Has endoribonuclease activity. The protein is Protein pelota homolog of Methanospirillum hungatei JF-1 (strain ATCC 27890 / DSM 864 / NBRC 100397 / JF-1).